A 406-amino-acid polypeptide reads, in one-letter code: Odorant receptor 10a (406 aa).

Residues 1 to 45 (MSEWLRFLKRDQQLDVYFFAVPRLSLDIMGYWPGKTGDTWPWRSL) are Cytoplasmic-facing. The chain crosses the membrane as a helical span at residues 46–66 (IHFAILAIGVATELHAGMCFL). The Extracellular segment spans residues 67 to 74 (DRQQITLA). Residues 75–95 (LETLCPAGTSAVTLLKMFLML) form a helical membrane-spanning segment. At 96–143 (RFRQDLSIMWNRLRGLLFDPNWERPEQRDIRLKHSAMAARINFWPLSA) the chain is on the cytoplasmic side. Residues 144–164 (GFFTCTTYNLKPILIAMILYL) traverse the membrane as a helical segment. At 165 to 189 (QNRYEDFVWFTPFNMTMPKVLLNYP) the chain is on the extracellular side. Residue N178 is glycosylated (N-linked (GlcNAc...) asparagine). The chain crosses the membrane as a helical span at residues 190–210 (FFPLTYIFIAYTGYVTIFMFG). The Cytoplasmic portion of the chain corresponds to 211–281 (GCDGFYFEFC…LTRFFRDRYT (71 aa)). Residues 282–302 (IITLAHFVSAAMVIGFSMVNL) traverse the membrane as a helical segment. Residues 303-308 (LTLGNN) are Extracellular-facing. The chain crosses the membrane as a helical span at residues 309-329 (GLGAMLYVAYTVAALSQLLVY). Residues 330-372 (CYGGTLVAESSTGLCRAMFSCPWQLFKPKQRRLVQLLILRSQR) are Cytoplasmic-facing. The chain crosses the membrane as a helical span at residues 373–393 (PVSMAVPFFSPSLATFAAILQ). The Extracellular segment spans residues 394–406 (TSGSIIALVKSFQ).

This sequence belongs to the insect chemoreceptor superfamily. Heteromeric odorant receptor channel (TC 1.A.69) family. Or1a subfamily. In terms of assembly, interacts with Orco. Complexes exist early in the endomembrane system in olfactory sensory neurons (OSNs), coupling these complexes to the conserved ciliary trafficking pathway. In terms of tissue distribution, expressed in olfactory sensory neurons in the antenna.

The protein localises to the cell membrane. Its function is as follows. Odorant receptor which mediates acceptance or avoidance behavior, depending on its substrates. The odorant receptor repertoire encodes a large collection of odor stimuli that vary widely in identity, intensity, and duration. May form a complex with Orco to form odorant-sensing units, providing sensitive and prolonged odorant signaling and calcium permeability. Involved in the behavioral responses to esters, and specifically to ethyl hexanoate, benzaldehyde, and acetophenone. This chain is Odorant receptor 10a (Or10a), found in Drosophila melanogaster (Fruit fly).